A 2057-amino-acid polypeptide reads, in one-letter code: Myosin heavy chain, non-muscle (2057 aa).

In terms of domain architecture, Myosin N-terminal SH3-like spans 78 to 128 (HRSVLVWVPHENQGFVAASIKREHGDEVEVELAETGKRVMILRDDIQKMNP). The region spanning 132-867 (DKVEDMAELT…VLAHLEEERD (736 aa)) is the Myosin motor domain. Position 225 to 232 (225 to 232 (GESGAGKT)) interacts with ATP. The interval 250 to 260 (PKGSGAVPHPA) is 25 kDa/50 kDa junction. A 50 kDa/20 kDa junction region spans residues 722–734 (DTQFGARTRKGMF). The segment at 745–767 (LAKLMDTLRNTNPNFVRCIIPNH) is actin-binding. Residues 782 to 798 (QLRCNGVLEGIRICRQG) are reactive sulfhydryl/actin-binding. Residues 870-899 (ISDLIVNFQAFCRGFLARRNYQKRLQQLNA) enclose the IQ domain. The stretch at 926-2016 (KPLLEVTKQE…SLKTKLRRTG (1091 aa)) forms a coiled coil. Disordered regions lie at residues 1124–1144 (EERL…KRKI), 1782–1802 (SSER…EEIA), and 2008–2057 (LKTK…DSAN). An alpha-helical tailpiece (LMM) region spans residues 1343–2010 (SQIAELQVKL…MNREINSLKT (668 aa)). Residues 1343–2057 (SQIAELQVKL…ESLDGEDSAN (715 aa)) are light meromyosin (LMM). The segment covering 1782–1792 (SSERARRAAET) has biased composition (basic and acidic residues). The globular tailpiece stretch occupies residues 2011–2057 (KLRRTGGIGLSSSRLTGTPSSKRAGGGGGSDDSSVQDESLDGEDSAN). Residues serine 2021 and serine 2022 each carry the phosphoserine modification. Acidic residues predominate over residues 2044-2057 (SVQDESLDGEDSAN).

It belongs to the TRAFAC class myosin-kinesin ATPase superfamily. Myosin family. In terms of assembly, interacts with sau. Interacts with ck and Ubr3. Ubiquitinated. In terms of tissue distribution, in Johnston's organ, expressed in neurons and scolopale cells.

The protein localises to the cell projection. The protein resides in the cilium. It is found in the cytoplasm. Nonmuscle myosin appears to be responsible for cellularization. Required for morphogenesis and cytokinesis. Necessary for auditory transduction: plays a role in Johnston's organ organization by acting in scolopidial apical attachment. Interaction with the myosin ck may be important for this function. Localizes to and defines the trailing edge of cells during larval epidermal wound healing. This process is dependent on the phosphatidylinositol 4-phosphate 5-kinase sktl/skittles. In Drosophila melanogaster (Fruit fly), this protein is Myosin heavy chain, non-muscle (zip).